A 255-amino-acid polypeptide reads, in one-letter code: MLRAHNLHIRRGRKTVLADVSLQLEPGEVLGVLGPNGAGKSTLLGALCGELSAHEGDVLLDGEALSRWSGTQRAQRLAVLPQVSTLDFAFRVEEVVGMGRLPYQSGRVRDDEIVAAALRAADAGHLSGRSYLALSGGERQRVHLARVLAQLWPGQAGQTLLLDEPTSMLDPLHQHTTLQAVREFADRGAAVLVILHDLNLAARYCDRILLLEGGRPVALDTPQQVLRPESLKAVFGLEVLVQTHPERGHPLIIAR.

The ABC transporter domain maps to 2 to 238 (LRAHNLHIRR…ESLKAVFGLE (237 aa)). 34–41 (GPNGAGKS) lines the ATP pocket.

It belongs to the ABC transporter superfamily. Heme (hemin) importer (TC 3.A.1.14.5) family. The complex is composed of two ATP-binding proteins (HmuV), two transmembrane proteins (HmuU) and a solute-binding protein (HmuT).

The protein localises to the cell inner membrane. In terms of biological role, part of the ABC transporter complex HmuTUV involved in hemin import. Responsible for energy coupling to the transport system. The polypeptide is Hemin import ATP-binding protein HmuV (Pseudomonas fluorescens (strain Pf0-1)).